The sequence spans 535 residues: uncharacterized protein (535 aa).

Transmembrane regions (helical) follow at residues 7-27 (DFDV…AYLA) and 509-529 (GGAV…ACLA).

The protein resides in the cell membrane. This is an uncharacterized protein from Mycobacterium bovis (strain ATCC BAA-935 / AF2122/97).